A 266-amino-acid chain; its full sequence is Type II iodothyronine deiodinase (266 aa).

Over methionine 1 to glutamine 13 the chain is Lumenal. The helical; Signal-anchor for type III membrane protein transmembrane segment at isoleucine 14–valine 34 threads the bilayer. Topologically, residues lysine 35–arginine 266 are cytoplasmic. Selenocysteine 134 is an active-site residue. Selenocysteine 134 is a non-standard amino acid (selenocysteine).

Belongs to the iodothyronine deiodinase family. In terms of assembly, predominantly monomer. Can form homodimers but homodimerization is not essential for enzyme activity.

It localises to the endoplasmic reticulum membrane. The enzyme catalyses 3,3',5-triiodo-L-thyronine + iodide + A + H(+) = L-thyroxine + AH2. The catalysed reaction is 3,3'-diiodo-L-thyronine + iodide + A + H(+) = 3,3',5'-triiodo-L-thyronine + AH2. It catalyses the reaction 3'-iodo-L-thyronine + iodide + A + H(+) = 3',5'-diiodo-L-thyronine + AH2. With respect to regulation, not inhibited by N(6)-propylthiouracil. Its function is as follows. Plays a crucial role in the metabolism of thyroid hormones (TH) and has specific roles in TH activation and inactivation by deiodination. Catalyzes the conversion of T4 (L-thyroxine/3,5,3',5'-tetraiodothyronine) to T3 (3,5,3'-triiodothyronine) and rT3 (3,3',5'-triiodothyronine) to T2 (3,3'-diiodothyronine) via outer-ring deiodination (ORD). Catalyzes the conversion 3',5'-T2 (3,5-diiodothyronine) to 3-T1 (3-monoiodothyronine) via ORD. This chain is Type II iodothyronine deiodinase (dio2), found in Fundulus heteroclitus (Killifish).